We begin with the raw amino-acid sequence, 335 residues long: MQPFYKRHFLRLMDFTPAEIAHLLALSTKLKADKKNGIETRRLQGKNIALIFEKDSTRTRCSFEVAAYDQGAQVTYLGPSGSQIGHKESIKDTARVLGRMYDGIQYRGYGQQIVETLAQYAGVPVWNGLTNEFHPTQLLADLLTMQEYLPGKALSDMTLVYVGDARNNMGNTMLEAAALTGLDLRLVAPKACWPDAGLVAECQAAAKQTGGSITLTEDIAAGVAGADFIYTDVWVSMGEPKETWKERIALLKPYQVNMAMIAATGNPQVKFLHCLPAFHDDQTTMGQQMAEQYGLHGGMEVTDEVFESAHSIVFDQAENRMHTIKAVMVATLAQD.

Carbamoyl phosphate contacts are provided by residues 56–59 (STRT), Q83, R107, and 134–137 (HPTQ). Residues N168, D232, and 236-237 (SM) contribute to the L-ornithine site. Carbamoyl phosphate-binding positions include 274-275 (CL) and R320.

It belongs to the aspartate/ornithine carbamoyltransferase superfamily. OTCase family.

It is found in the cytoplasm. The enzyme catalyses carbamoyl phosphate + L-ornithine = L-citrulline + phosphate + H(+). It functions in the pathway amino-acid biosynthesis; L-arginine biosynthesis; L-arginine from L-ornithine and carbamoyl phosphate: step 1/3. Its function is as follows. Reversibly catalyzes the transfer of the carbamoyl group from carbamoyl phosphate (CP) to the N(epsilon) atom of ornithine (ORN) to produce L-citrulline. This Pectobacterium atrosepticum (strain SCRI 1043 / ATCC BAA-672) (Erwinia carotovora subsp. atroseptica) protein is Ornithine carbamoyltransferase.